We begin with the raw amino-acid sequence, 627 residues long: Monoterpene synthase like 1, chloroplastic (627 aa).

Residues 1–50 (MDLISVLPSTSKSCVCMHKPLSSSTHKLKPFCRTIRILGMPRPRKSVLMA) constitute a chloroplast transit peptide. Asp-378, Asp-382, and Asp-530 together coordinate Mg(2+). The DDXXD motif signature appears at 378–382 (DDMYD).

It belongs to the terpene synthase family. Tpsd subfamily. The cofactor is Mg(2+). Requires Mn(2+) as cofactor.

Its subcellular location is the plastid. It localises to the chloroplast. Its pathway is terpene metabolism; oleoresin biosynthesis. It functions in the pathway secondary metabolite biosynthesis; terpenoid biosynthesis. In terms of biological role, monoterpene synthase (TPS) involved in the biosynthesis of monoterpene natural products included in conifer oleoresin secretions and volatile emissions; these compounds contribute to biotic and abiotic stress defense against herbivores and pathogens. The chain is Monoterpene synthase like 1, chloroplastic from Pinus contorta (Shore pine).